The primary structure comprises 203 residues: HTH-type transcriptional regulator BetI (203 aa).

Positions 8–68 constitute an HTH tetR-type domain; the sequence is PVRRKALVDA…ATIRSLLGKL (61 aa). The H-T-H motif DNA-binding region spans 31 to 50; it reads TMSEIARTAGVSPALAHHYF.

It functions in the pathway amine and polyamine biosynthesis; betaine biosynthesis via choline pathway [regulation]. In terms of biological role, repressor involved in the biosynthesis of the osmoprotectant glycine betaine. It represses transcription of the choline transporter BetT and the genes of BetAB involved in the synthesis of glycine betaine. This Rhizobium meliloti (strain 1021) (Ensifer meliloti) protein is HTH-type transcriptional regulator BetI.